The primary structure comprises 474 residues: Pleckstrin homology domain-containing family S member 1 (474 aa).

The region spanning 20–135 (EVHKRDYFIK…WVSFMTPYCQ (116 aa)) is the PH domain. 3 disordered regions span residues 232–251 (IAGPNDSGDSIESNSPDQGF), 272–321 (STSA…DDQK), and 449–474 (RDLPELERTPKRSPAIKKSQKEAAGE). Positions 238-248 (SGDSIESNSPD) are enriched in polar residues. Residues 449-458 (RDLPELERTP) show a composition bias toward basic and acidic residues.

The polypeptide is Pleckstrin homology domain-containing family S member 1 (Mus musculus (Mouse)).